Here is a 615-residue protein sequence, read N- to C-terminus: Medium-chain acyl-CoA ligase ACSF2, mitochondrial (615 aa).

The transit peptide at 1–49 directs the protein to the mitochondrion; sequence MAVYLGMLRLGRLCVASLGARGPRTPLSRPWPNSKLQGVRAFSSGMVDC. An N6-acetyllysine modification is found at lysine 179. Lysine 182 is modified (N6-acetyllysine; alternate). Lysine 182 is subject to N6-succinyllysine; alternate. Residue lysine 199 is modified to N6-acetyllysine. 263–271 provides a ligand contact to ATP; the sequence is TSGTTGNPK. Lysine 340 and lysine 398 each carry N6-acetyllysine. An N6-succinyllysine modification is found at lysine 478. Residues aspartate 493 and arginine 508 each coordinate ATP. An N6-acetyllysine modification is found at lysine 510. Lysine 544 and lysine 570 each carry N6-acetyllysine; alternate. 2 positions are modified to N6-succinyllysine; alternate: lysine 544 and lysine 570. An ATP-binding site is contributed by lysine 599. Lysine 599 carries the N6-succinyllysine modification.

Belongs to the ATP-dependent AMP-binding enzyme family.

The protein localises to the mitochondrion. The catalysed reaction is a medium-chain fatty acid + ATP + CoA = a medium-chain fatty acyl-CoA + AMP + diphosphate. It catalyses the reaction octanoate + ATP + CoA = octanoyl-CoA + AMP + diphosphate. In terms of biological role, acyl-CoA synthases catalyze the initial reaction in fatty acid metabolism, by forming a thioester with CoA. Has some preference toward medium-chain substrates. Plays a role in adipocyte differentiation. The polypeptide is Medium-chain acyl-CoA ligase ACSF2, mitochondrial (Rattus norvegicus (Rat)).